The chain runs to 357 residues: Phosphoribosylformylglycinamidine cyclo-ligase (357 aa).

It belongs to the AIR synthase family.

It localises to the cytoplasm. The catalysed reaction is 2-formamido-N(1)-(5-O-phospho-beta-D-ribosyl)acetamidine + ATP = 5-amino-1-(5-phospho-beta-D-ribosyl)imidazole + ADP + phosphate + H(+). The protein operates within purine metabolism; IMP biosynthesis via de novo pathway; 5-amino-1-(5-phospho-D-ribosyl)imidazole from N(2)-formyl-N(1)-(5-phospho-D-ribosyl)glycinamide: step 2/2. In Nitrobacter winogradskyi (strain ATCC 25391 / DSM 10237 / CIP 104748 / NCIMB 11846 / Nb-255), this protein is Phosphoribosylformylglycinamidine cyclo-ligase.